The chain runs to 173 residues: Calmodulin-like protein 11 (173 aa).

Residues 1 to 26 are compositionally biased toward low complexity; the sequence is MEEIQQQQQQQQQQQQQQQQQQQQQQ. Residues 1–27 are disordered; the sequence is MEEIQQQQQQQQQQQQQQQQQQQQQQE. 4 consecutive EF-hand domains span residues 31–66, 67–102, 104–139, and 140–173; these read EQIM…LDQN, PTEQ…QLQE, DADE…LGEK, and LTDE…MING. 20 residues coordinate Ca(2+): aspartate 44, aspartate 46, aspartate 48, cysteine 50, glutamate 55, aspartate 80, aspartate 82, asparagine 84, threonine 86, glutamate 91, aspartate 117, aspartate 119, asparagine 121, tyrosine 123, glutamate 128, aspartate 153, aspartate 155, aspartate 157, glutamine 159, and glutamate 164.

Belongs to the calmodulin family.

In terms of biological role, potential calcium sensor. In Arabidopsis thaliana (Mouse-ear cress), this protein is Calmodulin-like protein 11 (CML11).